Consider the following 150-residue polypeptide: C-type natriuretic peptide (150 aa).

The N-terminal stretch at 1 to 31 is a signal peptide; sequence MSISSSSSSSSSSSSCLLLISLMLLAASCQG. Positions 32 to 127 are excised as a propeptide; sequence RPDLQHRNHK…RKMFRGRTKK (96 aa). Low complexity predominate over residues 60-73; it reads GAADGSSGEEAALS. The segment at 60–109 is disordered; sequence GAADGSSGEEAALSQRAPPSIRALHPRSGRLGLRDDLEAEPPAENKPRRR. C134 and C150 are disulfide-bonded.

Belongs to the natriuretic peptide family. As to expression, expressed in brain, but not in atrium or ventricle.

It is found in the secreted. In terms of biological role, hormone which plays a role in endochondral ossification through regulation of cartilaginous growth plate chondrocytes proliferation and differentiation. May also be vasoactive and natriuretic. The chain is C-type natriuretic peptide (cnp) from Acipenser transmontanus (White sturgeon).